The following is a 459-amino-acid chain: Hemopexin (459 aa).

An N-terminal signal peptide occupies residues 1–23 (MARALRVPVALWLLGLCWSLAKA). 3 disulfides stabilise this stretch: Cys-52–Cys-232, Cys-150–Cys-155, and Cys-189–Cys-201. 4 Hemopexin repeats span residues 55-95 (GWGF…WKDA), 96-140 (PSPV…FPGI), 141-185 (PFPL…SWPA), and 186-232 (VGNC…FMSC). Heme is bound at residue His-81. Heme is bound at residue His-151. A glycan (N-linked (GlcNAc...) asparagine) is linked at Asn-188. An N-linked (GlcNAc...) asparagine glycan is attached at Asn-218. His-237 contacts heme. The N-linked (GlcNAc...) asparagine glycan is linked to Asn-241. 3 disulfide bridges follow: Cys-250–Cys-453, Cys-359–Cys-401, and Cys-411–Cys-428. 4 Hemopexin repeats span residues 252–297 (PHLV…WPQG), 298–345 (PSTV…FGSP), 350–389 (LHSVDAAFTCPGSSQLYIMAGQKLWRLDLNLGAQATWTEL), and 393–444 (HTKV…LPQA). His-286 lines the heme pocket.

Belongs to the hemopexin family.

Its subcellular location is the secreted. In terms of biological role, binds heme and transports it to the liver for breakdown and iron recovery, after which the free hemopexin returns to the circulation. The chain is Hemopexin (HPX) from Bos taurus (Bovine).